Reading from the N-terminus, the 451-residue chain is UPF0210 protein Asuc_1169 (451 aa).

It belongs to the UPF0210 family. As to quaternary structure, homodimer.

The chain is UPF0210 protein Asuc_1169 from Actinobacillus succinogenes (strain ATCC 55618 / DSM 22257 / CCUG 43843 / 130Z).